A 482-amino-acid polypeptide reads, in one-letter code: Nucleoside triphosphate pyrophosphatase/Nudix hydrolase fusion protein (482 aa).

The tract at residues Met-1 to Leu-299 is maf-like. The active-site Proton acceptor is Asp-167. The 138-residue stretch at Gly-338–Leu-475 folds into the Nudix hydrolase domain.

In the N-terminal section; belongs to the Maf family. It depends on a divalent metal cation as a cofactor.

The protein resides in the cytoplasm. The catalysed reaction is a ribonucleoside 5'-triphosphate + H2O = a ribonucleoside 5'-phosphate + diphosphate + H(+). The enzyme catalyses a 2'-deoxyribonucleoside 5'-triphosphate + H2O = a 2'-deoxyribonucleoside 5'-phosphate + diphosphate + H(+). In terms of biological role, nucleoside triphosphate pyrophosphatase. May have a dual role in cell division arrest and in preventing the incorporation of modified nucleotides into cellular nucleic acids. This chain is Nucleoside triphosphate pyrophosphatase/Nudix hydrolase fusion protein, found in Bifidobacterium longum (strain NCC 2705).